Reading from the N-terminus, the 231-residue chain is Urease accessory protein UreE (231 aa).

The tract at residues V185–H231 is disordered. Basic and acidic residues predominate over residues H203–H231.

This sequence belongs to the UreE family.

It localises to the cytoplasm. Involved in urease metallocenter assembly. Binds nickel. Probably functions as a nickel donor during metallocenter assembly. The sequence is that of Urease accessory protein UreE from Yersinia pestis bv. Antiqua (strain Antiqua).